The primary structure comprises 360 residues: Peptide chain release factor 1 (360 aa).

At Q235 the chain carries N5-methylglutamine.

Belongs to the prokaryotic/mitochondrial release factor family. Methylated by PrmC. Methylation increases the termination efficiency of RF1.

The protein localises to the cytoplasm. Peptide chain release factor 1 directs the termination of translation in response to the peptide chain termination codons UAG and UAA. The chain is Peptide chain release factor 1 from Leptothrix cholodnii (strain ATCC 51168 / LMG 8142 / SP-6) (Leptothrix discophora (strain SP-6)).